The sequence spans 467 residues: Neutrophil collagenase (467 aa).

Residues 1–20 form the signal peptide; the sequence is MFSLKTLPFLLLLHVQISKA. Positions 21–100 are cleaved as a propeptide — activation peptide; sequence FPVSSKEKNT…CGVPDSGGFM (80 aa). Asn-54 and Asn-73 each carry an N-linked (GlcNAc...) asparagine glycan. The Cysteine switch motif lies at 89–96; that stretch reads PRCGVPDS. Zn(2+) is bound at residue Cys-91. N-linked (GlcNAc...) asparagine glycosylation occurs at Asn-112. Asp-157 provides a ligand contact to Ca(2+). Residues His-167 and Asp-169 each contribute to the Zn(2+) site. The Ca(2+) site is built by Asp-174, Gly-175, Asn-177, and Ile-179. Residue His-182 participates in Zn(2+) binding. The Ca(2+) site is built by Gly-189, Gly-191, and Asp-193. A Zn(2+)-binding site is contributed by His-195. Ca(2+) is bound by residues Asp-197 and Glu-200. N-linked (GlcNAc...) asparagine glycosylation occurs at Asn-204. Residue His-217 coordinates Zn(2+). The active site involves Glu-218. Zn(2+) is bound by residues His-221 and His-227. Asn-246 is a glycosylation site (N-linked (GlcNAc...) asparagine). 4 Hemopexin repeats span residues 276–325, 326–372, 374–420, and 421–464; these read PKPC…WPSL, PTGI…GFPS, VQAI…FPGI, and ESKV…WLNC. Cys-279 and Cys-464 are disulfide-bonded. Asp-286 lines the Ca(2+) pocket. 2 residues coordinate Ca(2+): Asp-378 and Asp-425.

Belongs to the peptidase M10A family. Ca(2+) is required as a cofactor. Requires Zn(2+) as cofactor. As to expression, neutrophils.

Its subcellular location is the cytoplasmic granule. It is found in the secreted. The protein localises to the extracellular space. It localises to the extracellular matrix. It catalyses the reaction Cleavage of interstitial collagens in the triple helical domain. Unlike EC 3.4.24.7, this enzyme cleaves type III collagen more slowly than type I.. With respect to regulation, cannot be activated without removal of the activation peptide. Can degrade fibrillar type I, II, and III collagens. The polypeptide is Neutrophil collagenase (MMP8) (Homo sapiens (Human)).